Here is a 254-residue protein sequence, read N- to C-terminus: PHD finger protein ALFIN-LIKE 8 (254 aa).

The tract at residues 137-194 is disordered; the sequence is GTAKKQSKEKTPKTSGKSNKSGTKPSRQPEPNSRGPKMPPPKDEDDSGGEEEEEEEDH. The span at 149-162 shows a compositional bias: low complexity; the sequence is KTSGKSNKSGTKPS. A compositionally biased stretch (acidic residues) spans 179–194; sequence DEDDSGGEEEEEEEDH. Residues 196–248 form a PHD-type zinc finger; sequence NTLCGACGDNYGQDEFWICCDACETWFHGKCVKITPAKAEHIKHYKCPNCSSS.

This sequence belongs to the Alfin family. Interacts with H3K4me3 and to a lesser extent with H3K4me2.

Its subcellular location is the nucleus. Functionally, histone-binding component that specifically recognizes H3 tails trimethylated on 'Lys-4' (H3K4me3), which mark transcription start sites of virtually all active genes. In Oryza sativa subsp. japonica (Rice), this protein is PHD finger protein ALFIN-LIKE 8.